A 506-amino-acid polypeptide reads, in one-letter code: Tetratricopeptide repeat protein 8 (506 aa).

Residues 83 to 112 (RPGTSFARPKTSAKGVNPILRPTTNAGRPL) are disordered. TPR repeat units follow at residues 217–250 (YYWK…KKLI), 251–283 (ETFA…FPEN), 284–317 (VTML…ESNN), 319–351 (EAIA…GVSS), 353–385 (ELFL…MTDD), 388–421 (ADVW…DPDH), 423–455 (ESLV…NPYM), and 456–489 (FEGN…FPEH).

In terms of assembly, part of BBSome complex, that contains at least bbs-1, bbs-2, bbs-4, bbs-5, osm-12, bbs-8/ttc-8 and bbs-9. In terms of tissue distribution, expressed in head and tail neurons. Expressed in ciliated male tail-neurons. Expressed in thermosensory and CO(2) sensory AFD neurons.

Its subcellular location is the cell projection. It localises to the cilium. The protein resides in the cytoplasm. The protein localises to the cytoskeleton. It is found in the cilium basal body. Its subcellular location is the cilium axoneme. Component of the BBSome complex. The BBSome complex is thought to function as a coat complex required for sorting of specific membrane proteins to the primary cilia. The BBSome complex is required for ciliogenesis but is dispensable for centriolar satellite function. Required for proper BBSome complex assembly and its ciliary localization. Required for cilia biogenesis and both the assembly and movement of intraflagellar transport proteins along the ciliary axoneme. Plays a role in guanylyl cyclase localization in the ring-like structures at the base of the finger compartment in AFD sensory neurons. The sequence is that of Tetratricopeptide repeat protein 8 from Caenorhabditis elegans.